The primary structure comprises 198 residues: Remorin (198 aa).

Positions 1-11 (MAELEAKKVEI) are enriched in basic and acidic residues. Positions 1 to 24 (MAELEAKKVEIVDPAPPAPGPVEA) are disordered. Positions 97–184 (EESEKSKAEN…LKAEELAAKY (88 aa)) form a coiled coil.

Belongs to the remorin family. Post-translationally, the N-terminus is blocked. In terms of processing, phosphorylated.

It localises to the cell membrane. Functionally, binds to both simple and complex galacturonides. May be involved in cell-to-cell signaling and molecular transport. The polypeptide is Remorin (Solanum tuberosum (Potato)).